Here is a 369-residue protein sequence, read N- to C-terminus: Cytoplasmic tRNA 2-thiolation protein 1 (369 aa).

It belongs to the TtcA family. CTU1/NCS6/ATPBD3 subfamily.

It is found in the cytoplasm. The protein operates within tRNA modification; 5-methoxycarbonylmethyl-2-thiouridine-tRNA biosynthesis. In terms of biological role, plays a central role in 2-thiolation of mcm(5)S(2)U at tRNA wobble positions of tRNA(Lys), tRNA(Glu) and tRNA(Gln). Directly binds tRNAs and probably acts by catalyzing adenylation of tRNAs, an intermediate required for 2-thiolation. It is unclear whether it acts as a sulfurtransferase that transfers sulfur from thiocarboxylated URM1 onto the uridine of tRNAs at wobble position. Prior mcm(5) tRNA modification by the elongator complex is required for 2-thiolation. May also be involved in protein urmylation. The protein is Cytoplasmic tRNA 2-thiolation protein 1 of Cryptococcus neoformans var. neoformans serotype D (strain JEC21 / ATCC MYA-565) (Filobasidiella neoformans).